Reading from the N-terminus, the 224-residue chain is N-(5'-phosphoribosyl)anthranilate isomerase (224 aa).

This sequence belongs to the TrpF family.

The enzyme catalyses N-(5-phospho-beta-D-ribosyl)anthranilate = 1-(2-carboxyphenylamino)-1-deoxy-D-ribulose 5-phosphate. The protein operates within amino-acid biosynthesis; L-tryptophan biosynthesis; L-tryptophan from chorismate: step 3/5. This Saccharomyces cerevisiae (strain ATCC 204508 / S288c) (Baker's yeast) protein is N-(5'-phosphoribosyl)anthranilate isomerase (TRP1).